Here is a 158-residue protein sequence, read N- to C-terminus: Rhombotin-2 (158 aa).

LIM zinc-binding domains follow at residues 30 to 89 (CGGC…RLFG) and 94 to 153 (CASC…EWTK).

As to quaternary structure, interacts with BEX2 and KDM5A. Interacts via its LIM domains with ELF2 and LDB1. Also interacts with basic helix-loop-helix protein TAL1/SCL and can assemble in a complex with LMO2 and TAL1/SCL. In terms of tissue distribution, expressed in early mouse development in central nervous system, lung, kidney, liver and spleen but only very low levels occur in thymus.

Its subcellular location is the nucleus. Functionally, acts with TAL1/SCL to regulate red blood cell development. Also acts with LDB1 to maintain erythroid precursors in an immature state. The protein is Rhombotin-2 (Lmo2) of Mus musculus (Mouse).